A 266-amino-acid chain; its full sequence is UPF0294 protein YafD (266 aa).

This sequence belongs to the UPF0294 family.

The protein localises to the cytoplasm. The chain is UPF0294 protein YafD from Salmonella newport (strain SL254).